Here is a 316-residue protein sequence, read N- to C-terminus: Aspartate carbamoyltransferase catalytic subunit (316 aa).

Arginine 58 and threonine 59 together coordinate carbamoyl phosphate. Lysine 86 is a binding site for L-aspartate. Carbamoyl phosphate is bound by residues arginine 108, histidine 136, and glutamine 139. L-aspartate is bound by residues arginine 169 and arginine 223. Residues glycine 265 and proline 266 each contribute to the carbamoyl phosphate site.

The protein belongs to the aspartate/ornithine carbamoyltransferase superfamily. ATCase family. Heterododecamer (2C3:3R2) of six catalytic PyrB chains organized as two trimers (C3), and six regulatory PyrI chains organized as three dimers (R2).

It catalyses the reaction carbamoyl phosphate + L-aspartate = N-carbamoyl-L-aspartate + phosphate + H(+). It functions in the pathway pyrimidine metabolism; UMP biosynthesis via de novo pathway; (S)-dihydroorotate from bicarbonate: step 2/3. Catalyzes the condensation of carbamoyl phosphate and aspartate to form carbamoyl aspartate and inorganic phosphate, the committed step in the de novo pyrimidine nucleotide biosynthesis pathway. This Anaeromyxobacter sp. (strain Fw109-5) protein is Aspartate carbamoyltransferase catalytic subunit.